A 39-amino-acid chain; its full sequence is Photosystem II reaction center protein J (39 aa).

Residues 7 to 27 traverse the membrane as a helical segment; the sequence is IPLWIVATVAGTGVLVVVGLF.

Belongs to the PsbJ family. In terms of assembly, PSII is composed of 1 copy each of membrane proteins PsbA, PsbB, PsbC, PsbD, PsbE, PsbF, PsbH, PsbI, PsbJ, PsbK, PsbL, PsbM, PsbT, PsbX, PsbY, PsbZ, Psb30/Ycf12, peripheral proteins PsbO, CyanoQ (PsbQ), PsbU, PsbV and a large number of cofactors. It forms dimeric complexes.

Its subcellular location is the cellular thylakoid membrane. One of the components of the core complex of photosystem II (PSII). PSII is a light-driven water:plastoquinone oxidoreductase that uses light energy to abstract electrons from H(2)O, generating O(2) and a proton gradient subsequently used for ATP formation. It consists of a core antenna complex that captures photons, and an electron transfer chain that converts photonic excitation into a charge separation. The polypeptide is Photosystem II reaction center protein J (Synechococcus elongatus (strain ATCC 33912 / PCC 7942 / FACHB-805) (Anacystis nidulans R2)).